A 469-amino-acid polypeptide reads, in one-letter code: 3-isopropylmalate dehydratase large subunit (469 aa).

[4Fe-4S] cluster is bound by residues C347, C407, and C410.

Belongs to the aconitase/IPM isomerase family. LeuC type 1 subfamily. As to quaternary structure, heterodimer of LeuC and LeuD. [4Fe-4S] cluster serves as cofactor.

The catalysed reaction is (2R,3S)-3-isopropylmalate = (2S)-2-isopropylmalate. Its pathway is amino-acid biosynthesis; L-leucine biosynthesis; L-leucine from 3-methyl-2-oxobutanoate: step 2/4. In terms of biological role, catalyzes the isomerization between 2-isopropylmalate and 3-isopropylmalate, via the formation of 2-isopropylmaleate. This chain is 3-isopropylmalate dehydratase large subunit, found in Prochlorococcus marinus (strain NATL2A).